The chain runs to 356 residues: Manganese-dependent ADP-ribose/CDP-alcohol diphosphatase (356 aa).

Positions 32, 34, 81, 117, 253, 290, and 292 each coordinate Zn(2+).

The protein belongs to the ADPRibase-Mn family. As to quaternary structure, monomer. The cofactor is Mg(2+).

It catalyses the reaction CDP-choline + H2O = phosphocholine + CMP + 2 H(+). The enzyme catalyses ADP-D-ribose + H2O = D-ribose 5-phosphate + AMP + 2 H(+). The catalysed reaction is CDP-glycerol + H2O = sn-glycerol 3-phosphate + CMP + 2 H(+). Hydrolyzes ADP-ribose, IDP-ribose, CDP-glycerol, CDP-choline and CDP-ethanolamine, but not other non-reducing ADP-sugars or CDP-glucose. The sequence is that of Manganese-dependent ADP-ribose/CDP-alcohol diphosphatase (adprm) from Xenopus laevis (African clawed frog).